We begin with the raw amino-acid sequence, 474 residues long: Probable diacyglycerol O-acyltransferase Tgs4 (474 aa).

The active-site Proton acceptor is histidine 135.

It belongs to the long-chain O-acyltransferase family.

It catalyses the reaction an acyl-CoA + a 1,2-diacyl-sn-glycerol = a triacyl-sn-glycerol + CoA. Its pathway is glycerolipid metabolism; triacylglycerol biosynthesis. Its function is as follows. Required for maintaining the appropriate mycolic acid composition and permeability of the envelope on its exposure to acidic pH. This is Probable diacyglycerol O-acyltransferase Tgs4 (tgs4) from Mycobacterium tuberculosis (strain CDC 1551 / Oshkosh).